We begin with the raw amino-acid sequence, 291 residues long: Small ribosomal subunit biogenesis GTPase RsgA (291 aa).

The CP-type G domain maps to 63–221; sequence HNELKRPPVS…IADTPGFSAL (159 aa). GTP-binding positions include 112 to 115 and 164 to 172; these read TKKD and GQSGVGKST. Cys-245, Cys-250, His-252, and Cys-258 together coordinate Zn(2+).

This sequence belongs to the TRAFAC class YlqF/YawG GTPase family. RsgA subfamily. In terms of assembly, monomer. Associates with 30S ribosomal subunit, binds 16S rRNA. Zn(2+) is required as a cofactor.

The protein localises to the cytoplasm. Functionally, one of several proteins that assist in the late maturation steps of the functional core of the 30S ribosomal subunit. Helps release RbfA from mature subunits. May play a role in the assembly of ribosomal proteins into the subunit. Circularly permuted GTPase that catalyzes slow GTP hydrolysis, GTPase activity is stimulated by the 30S ribosomal subunit. The sequence is that of Small ribosomal subunit biogenesis GTPase RsgA from Staphylococcus haemolyticus (strain JCSC1435).